The primary structure comprises 49 residues: Large ribosomal subunit protein bL33 (49 aa).

This sequence belongs to the bacterial ribosomal protein bL33 family.

In Clostridium perfringens (strain ATCC 13124 / DSM 756 / JCM 1290 / NCIMB 6125 / NCTC 8237 / Type A), this protein is Large ribosomal subunit protein bL33.